We begin with the raw amino-acid sequence, 1226 residues long: Methionine synthase (1226 aa).

The Hcy-binding domain maps to 6–326 (RAQIEAQLKQ…EHIRHMAMAV (321 aa)). Zn(2+)-binding residues include Cys-248, Cys-311, and Cys-312. Residues 357-618 (FVNVGERTNV…VPEKLREAVE (262 aa)) enclose the Pterin-binding domain. Residues 651–745 (SALEWRTWSV…FINASKQAGS (95 aa)) enclose the B12-binding N-terminal domain. Methylcob(III)alamin-binding positions include Glu-695, 757-761 (GDVHD), His-760, Ser-805, Thr-809, and Ala-861. A B12-binding domain is found at 747-882 (NGKILLATVK…SDELRPAFVE (136 aa)). An AdoMet activation domain is found at 898–1226 (KKPRTKPVTL…EKWLGPNING (329 aa)). Residues Asp-948, Arg-1136, and 1191 to 1192 (YF) each bind S-adenosyl-L-methionine.

Belongs to the vitamin-B12 dependent methionine synthase family. It depends on methylcob(III)alamin as a cofactor. Requires Zn(2+) as cofactor.

The catalysed reaction is (6S)-5-methyl-5,6,7,8-tetrahydrofolate + L-homocysteine = (6S)-5,6,7,8-tetrahydrofolate + L-methionine. Its pathway is amino-acid biosynthesis; L-methionine biosynthesis via de novo pathway; L-methionine from L-homocysteine (MetH route): step 1/1. In terms of biological role, catalyzes the transfer of a methyl group from methyl-cobalamin to homocysteine, yielding enzyme-bound cob(I)alamin and methionine. Subsequently, remethylates the cofactor using methyltetrahydrofolate. The chain is Methionine synthase (metH) from Vibrio vulnificus (strain CMCP6).